A 502-amino-acid chain; its full sequence is Glycogen synthase 1 (502 aa).

ADP-alpha-D-glucose is bound at residue Lys18.

The protein belongs to the glycosyltransferase 1 family. Bacterial/plant glycogen synthase subfamily.

The catalysed reaction is [(1-&gt;4)-alpha-D-glucosyl](n) + ADP-alpha-D-glucose = [(1-&gt;4)-alpha-D-glucosyl](n+1) + ADP + H(+). It participates in glycan biosynthesis; glycogen biosynthesis. In terms of biological role, synthesizes alpha-1,4-glucan chains using ADP-glucose. The polypeptide is Glycogen synthase 1 (Geobacter metallireducens (strain ATCC 53774 / DSM 7210 / GS-15)).